We begin with the raw amino-acid sequence, 713 residues long: Cyclomaltodextrin glucanotransferase (713 aa).

The first 27 residues, 1–27, serve as a signal peptide directing secretion; that stretch reads MKRFMKLTAVWTLWLSLTLGLLSPVHA. Positions 28–165 are A1; the sequence is APDTSVSNKQ…NIKVIIDFAP (138 aa). The Ca(2+) site is built by Asp54, Asn56, Asn59, and Asn60. Cysteines 70 and 77 form a disulfide. Ca(2+) contacts are provided by Gly78 and Asp80. 127–128 serves as a coordination point for substrate; it reads YW. Asn166 lines the Ca(2+) pocket. Residues 166–229 are b; the sequence is NHTSPASSDD…NLYDLADLNH (64 aa). Position 167 (His167) interacts with substrate. Residue Ile217 coordinates Ca(2+). 220-223 lines the substrate pocket; it reads NLYD. Asp226 lines the Ca(2+) pocket. Residues 230-433 form an A2 region; that stretch reads NNSSVDVYLK…LRKSNPAIAY (204 aa). Arg254 contacts substrate. Catalysis depends on Asp256, which acts as the Nucleophile. Residue 259–260 coordinates substrate; sequence KH. A Ca(2+)-binding site is contributed by His260. Glu284 serves as the catalytic Proton donor. Substrate is bound by residues His354, Asp398, and Arg402. Residues 434 to 522 form a c region; it reads GSTHERWINN…GTAVWQYTTD (89 aa). Residues 523–609 are d; that stretch reads ATTPIIGNVG…SNIYDNFEVL (87 aa). The 82-residue stretch at 526–607 folds into the IPT/TIG domain; that stretch reads PIIGNVGPMM…AASNIYDNFE (82 aa). The CBM20 domain maps to 608 to 713; that stretch reads VLTGDQVTVR…TATVNVNWQP (106 aa). Positions 610 to 713 are e; sequence TGDQVTVRFV…TATVNVNWQP (104 aa).

Belongs to the glycosyl hydrolase 13 family. As to quaternary structure, monomer. Ca(2+) is required as a cofactor.

Its subcellular location is the secreted. The enzyme catalyses Cyclizes part of a (1-&gt;4)-alpha-D-glucan chain by formation of a (1-&gt;4)-alpha-D-glucosidic bond.. The protein is Cyclomaltodextrin glucanotransferase (cgt) of Bacillus sp. (strain 1011).